We begin with the raw amino-acid sequence, 135 residues long: Probable disulfide formation protein (135 aa).

A helical transmembrane segment spans residues 7 to 26 (SYCLYLAWLFSCIGTLMSVY). A disulfide bridge links Cys36 with Cys39. The next 2 membrane-spanning stretches (helical) occupy residues 41–60 (YQRI…AYRE) and 67–84 (YTLP…YQVC). An intrachain disulfide couples Cys96 to Cys101. Residues 109-131 (GFITMPMASAAAFCAIACLLVLA) form a helical membrane-spanning segment.

Belongs to the DsbB family. BdbC subfamily.

Its subcellular location is the cell inner membrane. Its function is as follows. Required for disulfide bond formation in some proteins. The chain is Probable disulfide formation protein from Chlamydia trachomatis serovar D (strain ATCC VR-885 / DSM 19411 / UW-3/Cx).